A 179-amino-acid chain; its full sequence is Ribosome maturation factor RimP (179 aa).

This sequence belongs to the RimP family.

It localises to the cytoplasm. Its function is as follows. Required for maturation of 30S ribosomal subunits. The sequence is that of Ribosome maturation factor RimP from Prosthecochloris aestuarii (strain DSM 271 / SK 413).